The chain runs to 661 residues: Kininogen-1 (661 aa).

A signal peptide spans 1–20; the sequence is MKLITTLLLCSGLLLTLTQG. The Cystatin kininogen-type 1 domain maps to 28–131; the sequence is CNDEAVFQAV…TQTCKIAPSK (104 aa). 9 disulfides stabilise this stretch: Cys-28/Cys-631, Cys-83/Cys-94, Cys-107/Cys-125, Cys-141/Cys-144, Cys-205/Cys-217, Cys-228/Cys-247, Cys-263/Cys-266, Cys-327/Cys-339, and Cys-350/Cys-369. Residue Asn-82 is glycosylated (N-linked (GlcNAc...) asparagine). The region spanning 150-253 is the Cystatin kininogen-type 2 domain; that stretch reads TDSPDLEPVL…SQSCTLYSGD (104 aa). 2 N-linked (GlcNAc...) asparagine glycosylation sites follow: Asn-168 and Asn-204. Residue Asn-242 is glycosylated (N-linked (GlcNAc...) asparagine). Residues 272 to 375 form the Cystatin kininogen-type 3 domain; that stretch reads VDSPELKEVL…TVKCQALDMT (104 aa). Residue Ser-331 is modified to Phosphoserine. 3 disordered regions span residues 405-471, 485-583, and 626-661; these read YIAR…LGHG, DGDD…FQDS, and ATSP…DALS. Composition is skewed to basic residues over residues 434–471 and 492–526; these read KANK…LGHG and TVGH…HGKH. The span at 541 to 555 shows a compositional bias: low complexity; it reads TESLASSSEYSTTST. Residues 650 to 661 show a composition bias toward acidic residues; it reads EFSDFDLLDALS.

As to quaternary structure, isoform LMW interacts with CRISP3. In terms of processing, bradykinin is released from kininogen by plasma kallikrein. Post-translationally, phosphorylated by FAM20C in the extracellular medium. Bradykinin is inactivated by ACE, which removes the dipeptide Arg-Phe from its C-terminus. As to expression, plasma.

It is found in the secreted. The protein localises to the extracellular space. In terms of biological role, kininogens are inhibitors of thiol proteases. HMW-kininogen plays an important role in blood coagulation by helping to position optimally prekallikrein and factor XI next to factor XII; HMW-kininogen inhibits the thrombin- and plasmin-induced aggregation of thrombocytes. LMW-kininogen inhibits the aggregation of thrombocytes. LMW-kininogen is in contrast to HMW-kininogen not involved in blood clotting. The active peptide bradykinin is a potent vasodilatator that is released from HMW-kininogen shows a variety of physiological effects: (A) influence in smooth muscle contraction, (B) induction of hypotension, (C) natriuresis and diuresis, (D) decrease in blood glucose level, (E) it is a mediator of inflammation and causes (E1) increase in vascular permeability, (E2) stimulation of nociceptors (4E3) release of other mediators of inflammation (e.g. prostaglandins), (F) it has a cardioprotective effect (directly via bradykinin action, indirectly via endothelium-derived relaxing factor action). The polypeptide is Kininogen-1 (Kng1) (Mus musculus (Mouse)).